The sequence spans 109 residues: Spermidine export protein MdtI (109 aa).

The next 4 membrane-spanning stretches (helical) occupy residues 6–26, 36–56, 64–84, and 88–108; these read WVHAAWLALAIVLEIVANVFL, IFGLLSLAAVLAAFSALSQAV, AYALWGGFGIAATLAAGWILF, and LNRKGWIGLVLLLAGMIMVKL.

Belongs to the drug/metabolite transporter (DMT) superfamily. Small multidrug resistance (SMR) (TC 2.A.7.1) family. MdtI subfamily. In terms of assembly, forms a complex with MdtJ.

It localises to the cell inner membrane. Functionally, catalyzes the excretion of spermidine. The chain is Spermidine export protein MdtI from Escherichia coli O139:H28 (strain E24377A / ETEC).